Reading from the N-terminus, the 316-residue chain is Ribosomal protein L11 methyltransferase (316 aa).

S-adenosyl-L-methionine-binding residues include threonine 160, glycine 181, aspartate 203, and asparagine 246.

This sequence belongs to the methyltransferase superfamily. PrmA family.

It localises to the cytoplasm. It carries out the reaction L-lysyl-[protein] + 3 S-adenosyl-L-methionine = N(6),N(6),N(6)-trimethyl-L-lysyl-[protein] + 3 S-adenosyl-L-homocysteine + 3 H(+). In terms of biological role, methylates ribosomal protein L11. This Heliobacterium modesticaldum (strain ATCC 51547 / Ice1) protein is Ribosomal protein L11 methyltransferase.